The primary structure comprises 326 residues: Sulfate/thiosulfate import ATP-binding protein CysA (326 aa).

The ABC transporter domain maps to Ile-3–Leu-237. Gly-35–Thr-42 serves as a coordination point for ATP.

Belongs to the ABC transporter superfamily. Sulfate/tungstate importer (TC 3.A.1.6) family. As to quaternary structure, the complex is composed of two ATP-binding proteins (CysA), two transmembrane proteins (CysT and CysW) and a solute-binding protein (CysP).

The protein localises to the cell inner membrane. It carries out the reaction sulfate(out) + ATP + H2O = sulfate(in) + ADP + phosphate + H(+). The catalysed reaction is thiosulfate(out) + ATP + H2O = thiosulfate(in) + ADP + phosphate + H(+). Part of the ABC transporter complex CysAWTP involved in sulfate/thiosulfate import. Responsible for energy coupling to the transport system. The sequence is that of Sulfate/thiosulfate import ATP-binding protein CysA from Pseudomonas syringae pv. tomato (strain ATCC BAA-871 / DC3000).